Here is a 178-residue protein sequence, read N- to C-terminus: Oligoribonuclease (178 aa).

The region spanning 7-168 is the Exonuclease domain; that stretch reads LIWIDLEMTG…DDIRESIAEL (162 aa). Y128 is a catalytic residue.

It belongs to the oligoribonuclease family.

It localises to the cytoplasm. In terms of biological role, 3'-to-5' exoribonuclease specific for small oligoribonucleotides. The polypeptide is Oligoribonuclease (Francisella tularensis subsp. holarctica (strain OSU18)).